The chain runs to 605 residues: MSNESCLPYYTAHSYSSMSAFKTSMGDLQRQLYNRGEYNIFKYAPMFESNFIQINKKGEVIDVHNRVRMVTVGIVCTSPILPLPDVMVLAQPTKICEQHVRWGRFAKGRGRRPVKTLELTRLLPLKFVKISIHDHEKQQLRLKLATGRTFYLQLCPSSDTREDLFCYWEKLVYLLRPPVESYCSTPTLLSGDAPPEDNKSLVAAELHREGDQSETGLYKPCDVSAATSSAYAGGEGIQHASHGTASAASPSTSTPGAAEGGAARTAGGMAVAGTATGPRTDVAIAGAAMSPATGAMSIATTKSAGPGQVTTALAGAAIKNPGENESSKSMAGAANISSEGISLALVGAASTSLEGTSTSMAGAASLSQDSSLSAAFAGSITTSKCAAERTEGPAVGPLISTLQSEGYMSERDGSQKVSQPSAEVWNENKERREKKDRHPSRKSSHHRKAGESHRRRAGDKNQKASSHRSASGHKNTRDDKKEKGYSNVRGKRHGSSRKSSTHSSTKKESRTTQELGKNQSASSTGALQKKASKISSFLRSLRATPGSKTRVTSHDREVDIVAKMVEKQNIEAKVEKAQGGQELEMISGTMTSEKTEMIVFETKSI.

Disordered regions lie at residues 234 to 265 (GEGI…AART) and 407 to 529 (YMSE…ALQK). A compositionally biased stretch (low complexity) spans 239–265 (HASHGTASAASPSTSTPGAAEGGAART). Residues 434-457 (KKDRHPSRKSSHHRKAGESHRRRA) show a composition bias toward basic residues. The Bipartite nuclear localization signal motif lies at 441–458 (RKSSHHRKAGESHRRRAG). Residues 463-473 (KASSHRSASGH) show a composition bias toward polar residues. Over residues 475-484 (NTRDDKKEKG) the composition is skewed to basic and acidic residues. Positions 489 to 500 (RGKRHGSSRKSS) are enriched in basic residues. The segment covering 513–526 (QELGKNQSASSTGA) has biased composition (polar residues). Residue S592 is modified to Phosphoserine.

Belongs to the GARIN family. In terms of assembly, interacts (via N-terminus) with RAB2B (in GTP-bound form). Interacts with FRG1. As to expression, expressed in adult spermatocytes and spermatids (at protein level).

It localises to the golgi apparatus. The protein resides in the nucleus. Its subcellular location is the cajal body. Its function is as follows. May be involved in RNA biogenesis. The chain is Golgi-associated RAB2 interactor protein 3 from Homo sapiens (Human).